The primary structure comprises 489 residues: N-succinylglutamate 5-semialdehyde dehydrogenase (489 aa).

224–229 contacts NAD(+); that stretch reads GSAKVG. Residues E247 and C281 contribute to the active site.

It belongs to the aldehyde dehydrogenase family. AstD subfamily.

The enzyme catalyses N-succinyl-L-glutamate 5-semialdehyde + NAD(+) + H2O = N-succinyl-L-glutamate + NADH + 2 H(+). It participates in amino-acid degradation; L-arginine degradation via AST pathway; L-glutamate and succinate from L-arginine: step 4/5. In terms of biological role, catalyzes the NAD-dependent reduction of succinylglutamate semialdehyde into succinylglutamate. The protein is N-succinylglutamate 5-semialdehyde dehydrogenase of Chromohalobacter salexigens (strain ATCC BAA-138 / DSM 3043 / CIP 106854 / NCIMB 13768 / 1H11).